Consider the following 77-residue polypeptide: Translation initiation factor IF-1, chloroplastic (77 aa).

An S1-like domain is found at M1 to R72.

It belongs to the IF-1 family. Component of the 30S ribosomal translation pre-initiation complex which assembles on the 30S ribosome in the order IF-2 and IF-3, IF-1 and N-formylmethionyl-tRNA(fMet); mRNA recruitment can occur at any time during PIC assembly.

It localises to the plastid. Its subcellular location is the chloroplast. One of the essential components for the initiation of protein synthesis. Stabilizes the binding of IF-2 and IF-3 on the 30S subunit to which N-formylmethionyl-tRNA(fMet) subsequently binds. Helps modulate mRNA selection, yielding the 30S pre-initiation complex (PIC). Upon addition of the 50S ribosomal subunit IF-1, IF-2 and IF-3 are released leaving the mature 70S translation initiation complex. The chain is Translation initiation factor IF-1, chloroplastic from Zygnema circumcarinatum (Green alga).